A 349-amino-acid chain; its full sequence is Aminomethyltransferase (349 aa).

This sequence belongs to the GcvT family. The glycine cleavage system is composed of four proteins: P, T, L and H.

The catalysed reaction is N(6)-[(R)-S(8)-aminomethyldihydrolipoyl]-L-lysyl-[protein] + (6S)-5,6,7,8-tetrahydrofolate = N(6)-[(R)-dihydrolipoyl]-L-lysyl-[protein] + (6R)-5,10-methylene-5,6,7,8-tetrahydrofolate + NH4(+). The glycine cleavage system catalyzes the degradation of glycine. This Thermus thermophilus (strain ATCC BAA-163 / DSM 7039 / HB27) protein is Aminomethyltransferase.